Here is a 269-residue protein sequence, read N- to C-terminus: Pertussis toxin subunit 1 homolog (269 aa).

Residues 1–34 form the signal peptide; it reads MRCTRAIRQTARTGWLTWLAILAVTAPMTSPAWA.

It belongs to the bacterial exotoxin subunit A family.

The protein is Pertussis toxin subunit 1 homolog (ptxA) of Bordetella parapertussis (strain 12822 / ATCC BAA-587 / NCTC 13253).